The following is a 379-amino-acid chain: Mannitol-1-phosphate 5-dehydrogenase (379 aa).

3–14 contacts NAD(+); sequence ALHFGAGNIGRG.

Belongs to the mannitol dehydrogenase family.

It carries out the reaction D-mannitol 1-phosphate + NAD(+) = beta-D-fructose 6-phosphate + NADH + H(+). This Bacillus licheniformis (strain ATCC 14580 / DSM 13 / JCM 2505 / CCUG 7422 / NBRC 12200 / NCIMB 9375 / NCTC 10341 / NRRL NRS-1264 / Gibson 46) protein is Mannitol-1-phosphate 5-dehydrogenase.